A 319-amino-acid chain; its full sequence is ATP-dependent 6-phosphofructokinase (319 aa).

Gly-11 is a binding site for ATP. Residue 21-25 (RAVVR) coordinates ADP. ATP contacts are provided by residues 72–73 (RC) and 102–105 (GDGS). Asp-103 is a Mg(2+) binding site. 125–127 (TID) contributes to the substrate binding site. The active-site Proton acceptor is Asp-127. Arg-154 lines the ADP pocket. Substrate is bound by residues Arg-162 and 169 to 171 (MGR). ADP contacts are provided by residues 185–187 (GAE), Arg-211, and 213–215 (KKH). Substrate is bound by residues Glu-222, Arg-243, and 249 to 252 (HVQR).

It belongs to the phosphofructokinase type A (PFKA) family. ATP-dependent PFK group I subfamily. Prokaryotic clade 'B1' sub-subfamily. Homotetramer. It depends on Mg(2+) as a cofactor.

The protein localises to the cytoplasm. The enzyme catalyses beta-D-fructose 6-phosphate + ATP = beta-D-fructose 1,6-bisphosphate + ADP + H(+). The protein operates within carbohydrate degradation; glycolysis; D-glyceraldehyde 3-phosphate and glycerone phosphate from D-glucose: step 3/4. With respect to regulation, allosterically activated by ADP and other diphosphonucleosides, and allosterically inhibited by phosphoenolpyruvate. Catalyzes the phosphorylation of D-fructose 6-phosphate to fructose 1,6-bisphosphate by ATP, the first committing step of glycolysis. The chain is ATP-dependent 6-phosphofructokinase from Bacillus anthracis (strain A0248).